We begin with the raw amino-acid sequence, 433 residues long: Protein translocase subunit SecY (433 aa).

10 helical membrane passes run 17 to 37 (IIFTIFMLIICRIGSFIPIPG), 71 to 91 (IFALAIMPYITASIIIQLMSV), 117 to 137 (LTVLLASFQAYGVALSLESMV), 141 to 161 (GPVVILAGFFFRVTTVITLVV), 184 to 204 (LIIFIGIISGVPSAIISMFEL), 212 to 232 (PLIAITVCIGVVLLIAIIIFF), 268 to 288 (GVIPPIFASSILLFPTTLANF), 310 to 330 (YILLYVVLIMFFSFFYTAIVF), 366 to 386 (LTVIGGLYLSIICVIPELLMN), and 388 to 408 (YVISLSLGGTSFLIVVNVVLD).

It belongs to the SecY/SEC61-alpha family. In terms of assembly, component of the Sec protein translocase complex. Heterotrimer consisting of SecY, SecE and SecG subunits. The heterotrimers can form oligomers, although 1 heterotrimer is thought to be able to translocate proteins. Interacts with the ribosome. Interacts with SecDF, and other proteins may be involved. Interacts with SecA.

The protein resides in the cell inner membrane. Its function is as follows. The central subunit of the protein translocation channel SecYEG. Consists of two halves formed by TMs 1-5 and 6-10. These two domains form a lateral gate at the front which open onto the bilayer between TMs 2 and 7, and are clamped together by SecE at the back. The channel is closed by both a pore ring composed of hydrophobic SecY resides and a short helix (helix 2A) on the extracellular side of the membrane which forms a plug. The plug probably moves laterally to allow the channel to open. The ring and the pore may move independently. The polypeptide is Protein translocase subunit SecY (Rickettsia typhi (strain ATCC VR-144 / Wilmington)).